A 402-amino-acid chain; its full sequence is Type II NADH:quinone oxidoreductase (402 aa).

FAD-binding positions include 12–16, 39–40, and Val83; these read GAGYA and NK. Glu172 is an active-site residue. Residues Asp302, 319 to 320, and Lys379 each bind FAD; that span reads AQ.

The protein belongs to the NADH dehydrogenase family. FAD serves as cofactor.

It is found in the cell membrane. It catalyses the reaction a quinone + NADH + H(+) = a quinol + NAD(+). Alternative, nonproton pumping NADH:quinone oxidoreductase that delivers electrons to the respiratory chain by oxidation of NADH and reduction of quinones, and contributes to the regeneration of NAD(+). The sequence is that of Type II NADH:quinone oxidoreductase from Staphylococcus saprophyticus subsp. saprophyticus (strain ATCC 15305 / DSM 20229 / NCIMB 8711 / NCTC 7292 / S-41).